Reading from the N-terminus, the 479-residue chain is ATP synthase subunit beta (479 aa).

ATP is bound at residue glycine 168–threonine 175.

This sequence belongs to the ATPase alpha/beta chains family. F-type ATPases have 2 components, CF(1) - the catalytic core - and CF(0) - the membrane proton channel. CF(1) has five subunits: alpha(3), beta(3), gamma(1), delta(1), epsilon(1). CF(0) has three main subunits: a(1), b(2) and c(9-12). The alpha and beta chains form an alternating ring which encloses part of the gamma chain. CF(1) is attached to CF(0) by a central stalk formed by the gamma and epsilon chains, while a peripheral stalk is formed by the delta and b chains.

It localises to the cell membrane. The enzyme catalyses ATP + H2O + 4 H(+)(in) = ADP + phosphate + 5 H(+)(out). Produces ATP from ADP in the presence of a proton gradient across the membrane. The catalytic sites are hosted primarily by the beta subunits. The protein is ATP synthase subunit beta of Frankia alni (strain DSM 45986 / CECT 9034 / ACN14a).